The sequence spans 451 residues: Probable phosphoglucosamine mutase (451 aa).

The Phosphoserine intermediate role is filled by Ser96. Mg(2+) contacts are provided by Ser96, Asp233, Asp235, and Asp237. Ser96 bears the Phosphoserine mark.

The protein belongs to the phosphohexose mutase family. Mg(2+) serves as cofactor. Activated by phosphorylation.

The enzyme catalyses alpha-D-glucosamine 1-phosphate = D-glucosamine 6-phosphate. In terms of biological role, catalyzes the conversion of glucosamine-6-phosphate to glucosamine-1-phosphate. The protein is Probable phosphoglucosamine mutase of Pyrococcus horikoshii (strain ATCC 700860 / DSM 12428 / JCM 9974 / NBRC 100139 / OT-3).